A 301-amino-acid polypeptide reads, in one-letter code: Glycine--tRNA ligase alpha subunit (301 aa).

Belongs to the class-II aminoacyl-tRNA synthetase family. Tetramer of two alpha and two beta subunits.

It is found in the cytoplasm. It carries out the reaction tRNA(Gly) + glycine + ATP = glycyl-tRNA(Gly) + AMP + diphosphate. The sequence is that of Glycine--tRNA ligase alpha subunit from Glaesserella parasuis serovar 5 (strain SH0165) (Haemophilus parasuis).